Reading from the N-terminus, the 262-residue chain is Cytochrome b mRNA maturase bI2 (262 aa).

Belongs to the LAGLIDADG endonuclease family.

The protein localises to the mitochondrion. Functionally, this protein is responsible for splicing and maturation of cytochrome b mRNA. Specifically, it may be responsible for the splicing specificity of the second intron. In Debaryomyces hansenii (strain ATCC 36239 / CBS 767 / BCRC 21394 / JCM 1990 / NBRC 0083 / IGC 2968) (Yeast), this protein is Cytochrome b mRNA maturase bI2 (bI2).